The chain runs to 87 residues: MDPPRTPPPSYSEVLMMDVMCGQVSPHVINDTSFVECIPPPQSRPAWNLWNNRRKTFSFLVLTGLAIAMILFIVFVLYVFHVNRQRR.

A Phosphothreonine modification is found at T6. The PPXY motif signature appears at 8–11 (PPSY). A helical transmembrane segment spans residues 59–79 (FLVLTGLAIAMILFIVFVLYV).

Interacts with host ITCH; this interaction probably mediates ITCH degradation. Interacts probably with NEDD4.

It is found in the membrane. Functionally, down-regulates the TCR/CD3E complex and the transferrin receptor TFRC in host T-cells by blocking them from recycling back to the cell surface. The protein is U24 protein (U24) of Homo sapiens (Human).